The primary structure comprises 82 residues: ATP synthase subunit c, chloroplastic (82 aa).

The next 2 membrane-spanning stretches (helical) occupy residues 4 to 24 and 57 to 77; these read IISA…AIGP and LAFM…LLFA.

Belongs to the ATPase C chain family. F-type ATPases have 2 components, F(1) - the catalytic core - and F(0) - the membrane proton channel. F(1) has five subunits: alpha(3), beta(3), gamma(1), delta(1), epsilon(1). F(0) has four main subunits: a(1), b(1), b'(1) and c(10-14). The alpha and beta chains form an alternating ring which encloses part of the gamma chain. F(1) is attached to F(0) by a central stalk formed by the gamma and epsilon chains, while a peripheral stalk is formed by the delta, b and b' chains.

Its subcellular location is the plastid. It localises to the chloroplast thylakoid membrane. Its function is as follows. F(1)F(0) ATP synthase produces ATP from ADP in the presence of a proton or sodium gradient. F-type ATPases consist of two structural domains, F(1) containing the extramembraneous catalytic core and F(0) containing the membrane proton channel, linked together by a central stalk and a peripheral stalk. During catalysis, ATP synthesis in the catalytic domain of F(1) is coupled via a rotary mechanism of the central stalk subunits to proton translocation. In terms of biological role, key component of the F(0) channel; it plays a direct role in translocation across the membrane. A homomeric c-ring of between 10-14 subunits forms the central stalk rotor element with the F(1) delta and epsilon subunits. The polypeptide is ATP synthase subunit c, chloroplastic (Heterosigma akashiwo (strain NIES-293 / 8280G21-1)).